The following is a 1338-amino-acid chain: MDRASELLFYVNGRKVIEKNVDPETMLLPYLRKKLRLTGTKYGCGGGGCGACTVMISRYNPITKRIRHHPANACLIPICSLYGAAVTTVEGIGSTHTRIHPVQERIAKCHGTQCGFCTPGMVMSIYTLLRNHPEPTLDQLTDALGGNLCRCTGYRPIIDACKTFCKTSGCCQSKENGVCCLDQGINGLPEFEEGSKTSPKLFAEEEFLPLDPTQELIFPPELMIMAEKQSQRTRVFGSERMMWFSPVTLKELLEFKFKYPQAPVIMGNTSVGPEVKFKGVFHPVIISPDRIEELSVVNHAYNGLTLGAGLSLAQVKDILADVVQKLPEEKTQMYHALLKHLGTLAGSQIRNMASLGGHIISRHPDSDLNPILAVGNCTLNLLSKEGKRQIPLNEQFLSKCPNADLKPQEILVSVNIPYSRKWEFVSAFRQAQRQENALAIVNSGMRVFFGEGDGIIRELCISYGGVGPATICAKNSCQKLIGRHWNEQMLDIACRLILNEVSLLGSAPGGKVEFKRTLIISFLFKFYLEVSQILKKMDPVHYPSLADKYESALEDLHSKHHCSTLKYQNIGPKQHPEDPIGHPIMHLSGVKHATGEAIYCDDMPLVDQELFLTFVTSSRAHAKIVSIDLSEALSMPGVVDIMTAEHLSDVNSFCFFTEAEKFLATDKVFCVGQLVCAVLADSEVQAKRAAKRVKIVYQDLEPLILTIEESIQHNSSFKPERKLEYGNVDEAFKVVDQILEGEIHMGGQEHFYMETQSMLVVPKGEDQEMDVYVSTQFPKYIQDIVASTLKLPANKVMCHVRRVGGAFGGKVLKTGIIAAVTAFAANKHGRAVRCVLERGEDMLITGGRHPYLGKYKAGFMNDGRILALDMEHYSNAGASLDESLFVIEMGLLKMDNAYKFPNLRCRGWACRTNLPSNTAFRGFGFPQAALITESCITEVAAKCGLSPEKVRIINMYKEIDQTPYKQEINAKNLIQCWRECMAMSSYSLRKVAVEKFNAENYWKKKGLAMVPLKFPVGLGSRAAGQAAALVHIYLDGSVLVTHGGIEMGQGVHTKMIQVVSRELRMPMSNVHLRGTSTETVPNANISGGSVVADLNGLAVKDACQTLLKRLEPIISKNPKGTWKDWAQTAFDESINLSAVGYFRGYESDMNWEKGEGQPFEYFVYGAACSEVEIDCLTGDHKNIRTDIVMDVGCSINPAIDIGQIEGAFIQGMGLYTIEELNYSPQGILHTRGPDQYKIPAICDMPTELHIALLPPSQNSNTLYSSKGLGESGVFLGCSVFFAIHDAVSAARQERGLHGPLTLNSPLTPEKIRMACEDKFTKMIPRDEPGSYVPWNVPI.

Positions 5–92 (SELLFYVNGR…GAAVTTVEGI (88 aa)) constitute a 2Fe-2S ferredoxin-type domain. [2Fe-2S] cluster-binding residues include cysteine 44, cysteine 49, cysteine 52, and cysteine 74. Residue glutamine 113 participates in Mo-molybdopterin binding. Residues cysteine 114, cysteine 117, cysteine 149, and cysteine 151 each contribute to the [2Fe-2S] cluster site. Position 151 (cysteine 151) interacts with Mo-molybdopterin. In terms of domain architecture, FAD-binding PCMH-type spans 236-421 (FGSERMMWFS…VSVNIPYSRK (186 aa)). FAD contacts are provided by residues 264 to 271 (VIMGNTSV), alanine 345, serine 354, histidine 358, aspartate 367, and leucine 411. Mo-molybdopterin-binding positions include 806–807 (AF) and methionine 1047. At serine 1068 the chain carries Phosphoserine. Mo-molybdopterin-binding positions include 1088–1091 (GSVV), glutamine 1203, and leucine 1268. Glutamate 1270 acts as the Proton acceptor; for azaheterocycle hydroxylase activity in catalysis.

The protein belongs to the xanthine dehydrogenase family. As to quaternary structure, homodimer. It depends on [2Fe-2S] cluster as a cofactor. Requires FAD as cofactor. The cofactor is Mo-molybdopterin. In terms of tissue distribution, abundant in liver, expressed in adipose tissue and at lower levels in lung, skeletal muscle, pancreas. In contrast to mice, no significant gender difference in AOX1 expression level (at protein level).

It is found in the cytoplasm. It carries out the reaction an aldehyde + O2 + H2O = a carboxylate + H2O2 + H(+). The catalysed reaction is retinal + O2 + H2O = retinoate + H2O2 + H(+). Its activity is regulated as follows. Is very potently inhibited by raloxifene. Also inhibited by estradiol, ethinyl estradiol, hydralazine, menadione, isovanillin and thioridazine. Not inhibited by allopurinol, a xanthine dehydrogenase potent inhibitor. Its function is as follows. Oxidase with broad substrate specificity, oxidizing aromatic azaheterocycles, such as N1-methylnicotinamide, N-methylphthalazinium and phthalazine, as well as aldehydes, such as benzaldehyde, retinal, pyridoxal, and vanillin. Plays a key role in the metabolism of xenobiotics and drugs containing aromatic azaheterocyclic substituents. Participates in the bioactivation of prodrugs such as famciclovir, catalyzing the oxidation step from 6-deoxypenciclovir to penciclovir, which is a potent antiviral agent. Is probably involved in the regulation of reactive oxygen species homeostasis. May be a prominent source of superoxide generation via the one-electron reduction of molecular oxygen. May also catalyze nitric oxide (NO) production via the reduction of nitrite to NO with NADH or aldehyde as electron donor. May play a role in adipogenesis. The chain is Aldehyde oxidase from Homo sapiens (Human).